Here is a 161-residue protein sequence, read N- to C-terminus: Chaperone protein dnaJ 11, chloroplastic (161 aa).

Over residues 1–18 (MLSSSPTSFTHPFLSSSP) the composition is skewed to low complexity. Residues 1-31 (MLSSSPTSFTHPFLSSSPPLSPISPPSRTAR) form a disordered region. Residues 1–36 (MLSSSPTSFTHPFLSSSPPLSPISPPSRTARISPPL) constitute a chloroplast transit peptide. Positions 65-133 (SLYDVLEVPL…EKRSVYDRRM (69 aa)) constitute a J domain.

It belongs to the DnaJ family. C/III subfamily. In terms of tissue distribution, expressed in roots, stems, leaves, flowers and developing siliques.

The protein localises to the plastid. Its subcellular location is the chloroplast stroma. Functionally, plays a continuous role in plant development probably in the structural organization of compartments. The polypeptide is Chaperone protein dnaJ 11, chloroplastic (ATJ11) (Arabidopsis thaliana (Mouse-ear cress)).